The sequence spans 361 residues: N-methyltransferase benX (361 aa).

The protein belongs to the methyltransferase superfamily.

It participates in secondary metabolite biosynthesis. Functionally, N-methyltransferase; part of the gene cluster that mediates the biosynthesis of benzomalvin A and D. The pathway begins with the loading of amino acid precursors onto the A domains of the non ribosomal peptide synthetases benY and benZ. BenY and the A1 domain of benZ are loaded with anthranilate (Anth), while the A2 domain of benZ is loaded with phenylalanine (Phe). N-methylation of Phe by the methyltransferase benX may happen before loading of Phe onto benZ, after loading of Phe, or after dipeptide formation. Condensation of Anth with the secondary amine of NmPhe or Phe is catalyzed by the C1 domain of benZ, forming a dipeptide intermediate. This is followed by in trans condensation of the Anth-NmPhe dipeptide with Anth bound to the T domain of benY by the C2 domain of benZ to form the linear tripeptide Anth-NmPhe-Anth. Cyclization and release of the tripeptide is then catalyzed by the C-terminal C domain of benY and the resulting 11-member macrocyclic intermediate is expected to spontaneously collapse to form the benzodiazepine core. Benzomalvin A is in conformational equilibrium with its atropisomer, benzomalvin D. The protein is N-methyltransferase benX of Aspergillus terreus.